A 294-amino-acid polypeptide reads, in one-letter code: Cutinase (294 aa).

Positions 1–33 are cleaved as a signal peptide; the sequence is MLRARPSHRLASAAAVVAATGAALLAGSSPAAA. A disulfide bridge links C36 with C107. S118 serves as the catalytic Nucleophile. A disulfide bond links C180 and C187. The active site involves D184. H198 (proton donor/acceptor) is an active-site residue. Positions 222-241 are disordered; the sequence is GTPTTPTPTPTPTPVPTTCV. Over residues 226–236 the composition is skewed to pro residues; sequence TPTPTPTPTPV. The tract at residues 240–294 is may be involved in substrate binding; that stretch reads CVRDSTRDHVAADRAVSLYGRAYARGSRDSLGATSSYNVVSLQQVEGGWRLVTAC.

This sequence belongs to the cutinase family.

Its subcellular location is the secreted. The catalysed reaction is cutin + H2O = cutin monomers.. The enzyme catalyses a tetradecanoate ester + H2O = an aliphatic alcohol + tetradecanoate + H(+). It carries out the reaction hexadecanoate ester + H2O = an aliphatic alcohol + hexadecanoate + H(+). It catalyses the reaction a butanoate ester + H2O = an aliphatic alcohol + butanoate + H(+). The catalysed reaction is an octanoate ester + H2O = an aliphatic alcohol + octanoate + H(+). In terms of biological role, catalyzes the hydrolysis of cutin, a polyester that forms the structure of plant cuticle. Shows esterase activity towards p-nitrophenol-linked aliphatic esters (pNP-aliphatic esters). Can depolymerize synthetic polyesters such as poly(epsilon-caprolactone) (PCL) and poly(1,3-propylene adipate) (PPA). Exhibits some activity on poly(lactic acid) (PLA). Can bind but not hydrolyze poly(hydroxybutyrate) (PHB). The chain is Cutinase from Kineococcus radiotolerans (strain ATCC BAA-149 / DSM 14245 / SRS30216).